A 305-amino-acid polypeptide reads, in one-letter code: tRNA-cytidine(32) 2-sulfurtransferase (305 aa).

Positions 1–20 (MTAVLPLPQPLADPAPRDPR) are disordered. The PP-loop motif signature appears at 59 to 64 (SGGKDS). Residues C134, C137, and C225 each contribute to the [4Fe-4S] cluster site. The span at 282 to 293 (DAPSDVDPDPSA) shows a compositional bias: low complexity. Residues 282–305 (DAPSDVDPDPSAWLSASHAPHDSD) are disordered.

It belongs to the TtcA family. Homodimer. Mg(2+) is required as a cofactor. Requires [4Fe-4S] cluster as cofactor.

The protein localises to the cytoplasm. It carries out the reaction cytidine(32) in tRNA + S-sulfanyl-L-cysteinyl-[cysteine desulfurase] + AH2 + ATP = 2-thiocytidine(32) in tRNA + L-cysteinyl-[cysteine desulfurase] + A + AMP + diphosphate + H(+). Its pathway is tRNA modification. Functionally, catalyzes the ATP-dependent 2-thiolation of cytidine in position 32 of tRNA, to form 2-thiocytidine (s(2)C32). The sulfur atoms are provided by the cysteine/cysteine desulfurase (IscS) system. The sequence is that of tRNA-cytidine(32) 2-sulfurtransferase from Xanthomonas euvesicatoria pv. vesicatoria (strain 85-10) (Xanthomonas campestris pv. vesicatoria).